Here is a 134-residue protein sequence, read N- to C-terminus: Large ribosomal subunit protein uL22 (134 aa).

Belongs to the universal ribosomal protein uL22 family. As to quaternary structure, part of the 50S ribosomal subunit.

Functionally, this protein binds specifically to 23S rRNA; its binding is stimulated by other ribosomal proteins, e.g. L4, L17, and L20. It is important during the early stages of 50S assembly. It makes multiple contacts with different domains of the 23S rRNA in the assembled 50S subunit and ribosome. In terms of biological role, the globular domain of the protein is located near the polypeptide exit tunnel on the outside of the subunit, while an extended beta-hairpin is found that lines the wall of the exit tunnel in the center of the 70S ribosome. This Rhodococcus jostii (strain RHA1) protein is Large ribosomal subunit protein uL22.